The sequence spans 457 residues: Adenylosuccinate synthetase isozyme 1 (457 aa).

The tract at residues 1–25 (MSGTRASNDRPPSAGGVKRGRLQHE) is disordered. GTP contacts are provided by residues 42–48 (GDEGKGK) and 70–72 (GHT). Residue D43 is the Proton acceptor of the active site. The Mg(2+) site is built by D43 and G70. D43 is a substrate binding site. IMP is bound by residues 43-46 (DEGK), 68-71 (NAGH), T163, R177, N256, T271, and R335. H71 serves as the catalytic Proton donor. 331 to 337 (VTTGRKR) is a binding site for substrate. Residues R337, 363-365 (KLD), and 445-448 (GVGK) each bind GTP.

The protein belongs to the adenylosuccinate synthetase family. Homodimer. The cofactor is Mg(2+). As to expression, predominantly expressed in the striated muscle tissues.

Its subcellular location is the cytoplasm. The enzyme catalyses IMP + L-aspartate + GTP = N(6)-(1,2-dicarboxyethyl)-AMP + GDP + phosphate + 2 H(+). It participates in purine metabolism; AMP biosynthesis via de novo pathway; AMP from IMP: step 1/2. In terms of biological role, component of the purine nucleotide cycle (PNC), which interconverts IMP and AMP to regulate the nucleotide levels in various tissues, and which contributes to glycolysis and ammoniagenesis. Catalyzes the first committed step in the biosynthesis of AMP from IMP. In Sus scrofa (Pig), this protein is Adenylosuccinate synthetase isozyme 1.